A 224-amino-acid chain; its full sequence is Thymidine kinase, cytosolic (224 aa).

Ser-13 carries the post-translational modification Phosphoserine. ATP contacts are provided by residues 26–33, 58–60, and 98–101; these read GPMFSGKS, DTR, and DEGQ. Glu-99 acts as the Proton acceptor in catalysis. Phe-129 serves as a coordination point for substrate. 2 residues coordinate Zn(2+): Cys-154 and Cys-157. Substrate is bound by residues 173 to 177 and Tyr-182; that span reads VEVIG. Zn(2+)-binding residues include Cys-186 and Cys-189. The KEN box motif lies at 203-205; sequence KEN.

The protein belongs to the thymidine kinase family. Homotetramer. Tetramerization from dimerization is induced by ATP and increases catalytic efficiency due to a high affinity for thymidine. Tetramerization is inhibited by phosphorylation at Ser-13. Interacts (via the KEN box) with FZR1. Phosphorylated on Ser-13 in mitosis. Phosphorylation of Ser-13 by CDK1 during mitosis reduces homotetramerization and catalytic efficiency when DNA replication is complete and intracellular TK1 is still present at a high level. In terms of processing, polyubiquitinated. Postmitosis, ubiquitination leads to proteasomal degradation. The KEN box sequence located at the C-terminal region targets for degradation by the anaphase promoting complex (APC/C) activated and rate-limited by FZR1.

Its subcellular location is the cytoplasm. It catalyses the reaction thymidine + ATP = dTMP + ADP + H(+). Its function is as follows. Cell-cycle-regulated enzyme of importance in nucleotide metabolism. Catalyzes the first enzymatic step in the salvage pathway converting thymidine into thymidine monophosphate. Transcriptional regulation limits expression to the S phase of the cell cycle and transient expression coincides with the oscillation in the intracellular dTTP concentration. This chain is Thymidine kinase, cytosolic (TK1), found in Gallus gallus (Chicken).